The sequence spans 443 residues: DILAAFRVTPQPGVPPEEAGAAVAAESSTGTWTTVWTDGLTSLDRYKGRCYDIEPVPGEDNQYICYVAYPLDLFEEGSVTNMFTSIVGNVFGFKALRALRLEDLRIPVAYVKTFQGPPHGIQVERDKLNKYGRPLLGCTIKPKLGLSAKNYGRAVYECLRGGLDFTKDDENVNSQPFMRWRDRFLFCAEAIYKAQAETGEIKGHYLNATAGTCEEMMKRAIFARELGVPIVMHDYLTGGFTANTSLAHYCRDNGLLLHIHRAMHAVIDRQKNHGIHFRVLAKALRMSGGDHIHSGTVVGKLEGERDITLGFVDLLRDDYIEKDRSRGIYFTQDWVSLPGVLPVASGGIHVWHMPALTEIFGDDSVLQFGGGTLGHPWGNAPGAVANRVALEACVQARNEGRDLAREGNEIIREASKWSPELAAACEVWKEIKFEFQAMDTLDK.

Substrate contacts are provided by Asn89 and Thr139. Lys141 acts as the Proton acceptor in catalysis. Lys143 contributes to the substrate binding site. The Mg(2+) site is built by Lys167, Asp169, and Glu170. Lys167 is subject to N6-carboxylysine. The active-site Proton acceptor is the His260. The substrate site is built by Arg261, His293, and Ser345.

It belongs to the RuBisCO large chain family. Type I subfamily. As to quaternary structure, heterohexadecamer of 8 large chains and 8 small chains; disulfide-linked. The disulfide link is formed within the large subunit homodimers. Mg(2+) serves as cofactor. In terms of processing, the disulfide bond which can form in the large chain dimeric partners within the hexadecamer appears to be associated with oxidative stress and protein turnover.

Its subcellular location is the plastid. It localises to the chloroplast. The catalysed reaction is 2 (2R)-3-phosphoglycerate + 2 H(+) = D-ribulose 1,5-bisphosphate + CO2 + H2O. It carries out the reaction D-ribulose 1,5-bisphosphate + O2 = 2-phosphoglycolate + (2R)-3-phosphoglycerate + 2 H(+). Its function is as follows. RuBisCO catalyzes two reactions: the carboxylation of D-ribulose 1,5-bisphosphate, the primary event in carbon dioxide fixation, as well as the oxidative fragmentation of the pentose substrate in the photorespiration process. Both reactions occur simultaneously and in competition at the same active site. The sequence is that of Ribulose bisphosphate carboxylase large chain from Villarsia calthifolia (Marsh flower).